Reading from the N-terminus, the 448-residue chain is Nicotinate phosphoribosyltransferase pncB1 (448 aa).

The disordered stretch occupies residues 1 to 21; it reads MGPPPAARRREGEPDNQDPAG. Phosphohistidine is present on H212. The segment at 353-372 is disordered; it reads RSSYKESPGGRKEALRRSRA.

Belongs to the NAPRTase family. Post-translationally, transiently phosphorylated on a His residue during the reaction cycle. Phosphorylation strongly increases the affinity for substrates and increases the rate of nicotinate D-ribonucleotide production. Dephosphorylation regenerates the low-affinity form of the enzyme, leading to product release.

The catalysed reaction is nicotinate + 5-phospho-alpha-D-ribose 1-diphosphate + ATP + H2O = nicotinate beta-D-ribonucleotide + ADP + phosphate + diphosphate. Its pathway is cofactor biosynthesis; NAD(+) biosynthesis; nicotinate D-ribonucleotide from nicotinate: step 1/1. In terms of biological role, involved in the Preiss-Handler pathway, which is a recycling route that permits the salvage of free nicotinamide (NM) and nicotinic acid (Na) involved in the NAD biosynthesis. Catalyzes the synthesis of beta-nicotinate D-ribonucleotide from nicotinate and 5-phospho-D-ribose 1-phosphate at the expense of ATP. It is not able to use nicotinamide. PncB1 contributes to basal NAD level. The chain is Nicotinate phosphoribosyltransferase pncB1 (pncB1) from Mycobacterium tuberculosis (strain CDC 1551 / Oshkosh).